Here is a 294-residue protein sequence, read N- to C-terminus: Protoheme IX farnesyltransferase (294 aa).

The next 9 membrane-spanning stretches (helical) occupy residues 24-44, 48-68, 96-116, 118-138, 145-165, 172-192, 211-231, 241-263, and 268-288; these read VVLL…PGWV, LIAF…AINH, ALWF…LFVN, LTAL…TGYL, NIVI…TAVT, ALLL…ALAI, GIQF…VVSL, WIYL…KLYF, and VVAM…FVFL.

It belongs to the UbiA prenyltransferase family. Protoheme IX farnesyltransferase subfamily.

It is found in the cell inner membrane. It carries out the reaction heme b + (2E,6E)-farnesyl diphosphate + H2O = Fe(II)-heme o + diphosphate. It functions in the pathway porphyrin-containing compound metabolism; heme O biosynthesis; heme O from protoheme: step 1/1. In terms of biological role, converts heme B (protoheme IX) to heme O by substitution of the vinyl group on carbon 2 of heme B porphyrin ring with a hydroxyethyl farnesyl side group. This chain is Protoheme IX farnesyltransferase, found in Legionella pneumophila (strain Lens).